The primary structure comprises 621 residues: Lethal(3)malignant brain tumor-like protein 4 (621 aa).

The disordered stretch occupies residues M1–T48. Composition is skewed to basic and acidic residues over residues L10–Q20 and E28–S44. 3 MBT repeats span residues W52–P152, F160–P260, and F269–P364. The CCHHC-type zinc finger occupies V370–E414. Residues C379, C384, H398, and C404 each coordinate Zn(2+). Residues W543–S607 form the SAM domain.

The protein localises to the nucleus. Its function is as follows. Putative Polycomb group (PcG) protein. PcG proteins maintain the transcriptionally repressive state of genes, probably via a modification of chromatin, rendering it heritably changed in its expressibility. The sequence is that of Lethal(3)malignant brain tumor-like protein 4 (L3mbtl4) from Mus musculus (Mouse).